The primary structure comprises 151 residues: Small ribosomal subunit protein uS15 (151 aa).

The protein belongs to the universal ribosomal protein uS15 family.

The protein is Small ribosomal subunit protein uS15 (RpS13) of Anopheles gambiae (African malaria mosquito).